The primary structure comprises 323 residues: o-succinylbenzoate synthase (323 aa).

Lysine 134 acts as the Proton donor in catalysis. Residues aspartate 162, glutamate 191, and aspartate 214 each coordinate Mg(2+). The Proton acceptor role is filled by lysine 236.

This sequence belongs to the mandelate racemase/muconate lactonizing enzyme family. MenC type 1 subfamily. A divalent metal cation is required as a cofactor.

It catalyses the reaction (1R,6R)-6-hydroxy-2-succinyl-cyclohexa-2,4-diene-1-carboxylate = 2-succinylbenzoate + H2O. Its pathway is quinol/quinone metabolism; 1,4-dihydroxy-2-naphthoate biosynthesis; 1,4-dihydroxy-2-naphthoate from chorismate: step 4/7. It functions in the pathway quinol/quinone metabolism; menaquinone biosynthesis. Functionally, converts 2-succinyl-6-hydroxy-2,4-cyclohexadiene-1-carboxylate (SHCHC) to 2-succinylbenzoate (OSB). The polypeptide is o-succinylbenzoate synthase (Edwardsiella ictaluri (strain 93-146)).